The following is a 468-amino-acid chain: Glutamate--tRNA ligase (468 aa).

A 'HIGH' region motif is present at residues 11 to 21 (PSPTGFIHLGN). A 'KMSKS' region motif is present at residues 243–247 (KMSKR). Residue K246 participates in ATP binding.

It belongs to the class-I aminoacyl-tRNA synthetase family. Glutamate--tRNA ligase type 1 subfamily. In terms of assembly, monomer.

Its subcellular location is the cytoplasm. The catalysed reaction is tRNA(Glu) + L-glutamate + ATP = L-glutamyl-tRNA(Glu) + AMP + diphosphate. Its function is as follows. Catalyzes the attachment of glutamate to tRNA(Glu) in a two-step reaction: glutamate is first activated by ATP to form Glu-AMP and then transferred to the acceptor end of tRNA(Glu). This is Glutamate--tRNA ligase from Delftia acidovorans (strain DSM 14801 / SPH-1).